The chain runs to 58 residues: Large ribosomal subunit protein bL32 (58 aa).

This sequence belongs to the bacterial ribosomal protein bL32 family.

This Staphylococcus aureus (strain NCTC 8325 / PS 47) protein is Large ribosomal subunit protein bL32.